The primary structure comprises 375 residues: Beta sliding clamp (375 aa).

Belongs to the beta sliding clamp family. As to quaternary structure, forms a ring-shaped head-to-tail homodimer around DNA which binds and tethers DNA polymerases and other proteins to the DNA. The DNA replisome complex has a single clamp-loading complex (3 tau and 1 each of delta, delta', psi and chi subunits) which binds 3 Pol III cores (1 core on the leading strand and 2 on the lagging strand) each with a beta sliding clamp dimer. Additional proteins in the replisome are other copies of gamma, psi and chi, Ssb, DNA helicase and RNA primase.

It localises to the cytoplasm. In terms of biological role, confers DNA tethering and processivity to DNA polymerases and other proteins. Acts as a clamp, forming a ring around DNA (a reaction catalyzed by the clamp-loading complex) which diffuses in an ATP-independent manner freely and bidirectionally along dsDNA. Initially characterized for its ability to contact the catalytic subunit of DNA polymerase III (Pol III), a complex, multichain enzyme responsible for most of the replicative synthesis in bacteria; Pol III exhibits 3'-5' exonuclease proofreading activity. The beta chain is required for initiation of replication as well as for processivity of DNA replication. The protein is Beta sliding clamp (dnaN) of Synechococcus elongatus (strain ATCC 33912 / PCC 7942 / FACHB-805) (Anacystis nidulans R2).